A 528-amino-acid chain; its full sequence is Xylose import ATP-binding protein XylG (528 aa).

ABC transporter domains are found at residues Leu-6–Glu-245 and Phe-262–Pro-507. An ATP-binding site is contributed by Gly-38–Ser-45. Residues Leu-504–Thr-528 are disordered.

The protein belongs to the ABC transporter superfamily. Xylose importer (TC 3.A.1.2.4) family. As to quaternary structure, the complex is composed of two ATP-binding proteins (XylG), two transmembrane proteins (XylH) and a solute-binding protein (XylF).

It is found in the cell inner membrane. It carries out the reaction D-xylose(out) + ATP + H2O = D-xylose(in) + ADP + phosphate + H(+). In terms of biological role, part of the ABC transporter complex XylFGH involved in xylose import. Responsible for energy coupling to the transport system. The polypeptide is Xylose import ATP-binding protein XylG (Pseudomonas syringae pv. tomato (strain ATCC BAA-871 / DC3000)).